The chain runs to 323 residues: Chitinase 1 (323 aa).

The N-terminal stretch at 1–20 is a signal peptide; that stretch reads MRALAVVVVATAFAVVAVRG. The Chitin-binding type-1 domain occupies 21–61; it reads EQCGSQAGGALCPNCLCCSQYGWCGSTSAYCGSGCQSQCSG. 8 disulfide bridges follow: Cys-23–Cys-38, Cys-32–Cys-44, Cys-35–Cys-63, Cys-37–Cys-51, Cys-55–Cys-59, Cys-100–Cys-162, Cys-176–Cys-184, and Cys-283–Cys-315. Glu-144 functions as the Proton donor in the catalytic mechanism.

This sequence belongs to the glycosyl hydrolase 19 family. Chitinase class I subfamily. In terms of tissue distribution, expressed in roots, leaves, sheaths and meristems.

It catalyses the reaction Random endo-hydrolysis of N-acetyl-beta-D-glucosaminide (1-&gt;4)-beta-linkages in chitin and chitodextrins.. Functionally, hydrolyzes chitin and may play a role in defense against fungal pathogens containing chitin. The polypeptide is Chitinase 1 (Cht1) (Oryza sativa subsp. japonica (Rice)).